We begin with the raw amino-acid sequence, 201 residues long: Small ribosomal subunit protein uS4c (201 aa).

The interval 15–44 is disordered; it reads LGALPGLTSKRPKTGNDLKNQSRSGKKSQY. The 62-residue stretch at 89–150 folds into the S4 RNA-binding domain; the sequence is MRLDNILFRL…EKKSRTLIQN (62 aa).

This sequence belongs to the universal ribosomal protein uS4 family. In terms of assembly, part of the 30S ribosomal subunit. Contacts protein S5. The interaction surface between S4 and S5 is involved in control of translational fidelity.

The protein localises to the plastid. It is found in the chloroplast. In terms of biological role, one of the primary rRNA binding proteins, it binds directly to 16S rRNA where it nucleates assembly of the body of the 30S subunit. With S5 and S12 plays an important role in translational accuracy. The chain is Small ribosomal subunit protein uS4c (rps4) from Cucumis sativus (Cucumber).